A 176-amino-acid chain; its full sequence is Large ribosomal subunit protein eL6 (176 aa).

Residues 1–27 are disordered; that stretch reads MSQVAPKWYQSEDVPAPKQTRKTARPQ.

The protein belongs to the eukaryotic ribosomal protein eL6 family. Component of the large ribosomal subunit. Mature ribosomes consist of a small (40S) and a large (60S) subunit. The 40S subunit contains about 32 different proteins and 1 molecule of RNA (18S). The 60S subunit contains 45 different proteins and 3 molecules of RNA (25S, 5.8S and 5S).

It is found in the cytoplasm. Component of the ribosome, a large ribonucleoprotein complex responsible for the synthesis of proteins in the cell. The small ribosomal subunit (SSU) binds messenger RNAs (mRNAs) and translates the encoded message by selecting cognate aminoacyl-transfer RNA (tRNA) molecules. The large subunit (LSU) contains the ribosomal catalytic site termed the peptidyl transferase center (PTC), which catalyzes the formation of peptide bonds, thereby polymerizing the amino acids delivered by tRNAs into a polypeptide chain. The nascent polypeptides leave the ribosome through a tunnel in the LSU and interact with protein factors that function in enzymatic processing, targeting, and the membrane insertion of nascent chains at the exit of the ribosomal tunnel. The polypeptide is Large ribosomal subunit protein eL6 (Candida albicans (strain SC5314 / ATCC MYA-2876) (Yeast)).